The sequence spans 268 residues: DNA repair protein RecO (268 aa).

It belongs to the RecO family.

In terms of biological role, involved in DNA repair and RecF pathway recombination. In Parasynechococcus marenigrum (strain WH8102), this protein is DNA repair protein RecO.